Here is a 210-residue protein sequence, read N- to C-terminus: Outer-membrane lipoprotein LolB (210 aa).

A signal peptide spans 1 to 26 (MSKLKIDTKRRFSLLIALVLIISLSS). C27 is lipidated: N-palmitoyl cysteine. Residue C27 is the site of S-diacylglycerol cysteine attachment.

This sequence belongs to the LolB family. In terms of assembly, monomer.

Its subcellular location is the cell outer membrane. Functionally, plays a critical role in the incorporation of lipoproteins in the outer membrane after they are released by the LolA protein. In Francisella tularensis subsp. novicida (strain U112), this protein is Outer-membrane lipoprotein LolB.